The following is a 364-amino-acid chain: Aminomethyltransferase (364 aa).

It belongs to the GcvT family. The glycine cleavage system is composed of four proteins: P, T, L and H.

It carries out the reaction N(6)-[(R)-S(8)-aminomethyldihydrolipoyl]-L-lysyl-[protein] + (6S)-5,6,7,8-tetrahydrofolate = N(6)-[(R)-dihydrolipoyl]-L-lysyl-[protein] + (6R)-5,10-methylene-5,6,7,8-tetrahydrofolate + NH4(+). The glycine cleavage system catalyzes the degradation of glycine. This Salmonella arizonae (strain ATCC BAA-731 / CDC346-86 / RSK2980) protein is Aminomethyltransferase.